The chain runs to 74 residues: Putative membrane protein insertion efficiency factor (74 aa).

Belongs to the UPF0161 family.

It is found in the cell inner membrane. Its function is as follows. Could be involved in insertion of integral membrane proteins into the membrane. The sequence is that of Putative membrane protein insertion efficiency factor from Anaeromyxobacter sp. (strain Fw109-5).